A 75-amino-acid polypeptide reads, in one-letter code: Large ribosomal subunit protein bL31 (75 aa).

The protein belongs to the bacterial ribosomal protein bL31 family. Type A subfamily. As to quaternary structure, part of the 50S ribosomal subunit.

Functionally, binds the 23S rRNA. The protein is Large ribosomal subunit protein bL31 of Rhodopseudomonas palustris (strain BisB18).